Here is a 44-residue protein sequence, read N- to C-terminus: Large ribosomal subunit protein P2 (44 aa).

Methionine 1 is modified (N-acetylmethionine). 2 positions are modified to phosphoserine: serine 17 and serine 19. Lysine 21 is subject to N6-acetyllysine; alternate. Lysine 21 is subject to N6-succinyllysine; alternate.

It belongs to the eukaryotic ribosomal protein P1/P2 family. As to quaternary structure, heterodimer with RPLP1 at the lateral ribosomal stalk of the large ribosomal subunit. Phosphorylated.

In terms of biological role, plays an important role in the elongation step of protein synthesis. This chain is Large ribosomal subunit protein P2 (RPLP2), found in Oryctolagus cuniculus (Rabbit).